The sequence spans 202 residues: MYLGRIISIGSSKDGVYASYRVSSRSFPNRKSVVNNQKVAIIPTQGSEDDIYKNPYISYNCIDIIDDICVVTNGSHTDIIAGKIREGMNMKDAVALSLLTMDYEKDDYNTPRIGGAINTKGEGYIGIVTHEGIEVKKVNPGESFYVSTYEHNTPREVDYTATNAKEATEFIFNGGIFSEFTHPVTSCAAFNKDEWEIDFKNP.

The protein belongs to the archaeal IMP cyclohydrolase family.

The enzyme catalyses IMP + H2O = 5-formamido-1-(5-phospho-D-ribosyl)imidazole-4-carboxamide. Its pathway is purine metabolism; IMP biosynthesis via de novo pathway; IMP from 5-formamido-1-(5-phospho-D-ribosyl)imidazole-4-carboxamide: step 1/1. Catalyzes the cyclization of 5-formylamidoimidazole-4-carboxamide ribonucleotide to IMP. In Methanosphaera stadtmanae (strain ATCC 43021 / DSM 3091 / JCM 11832 / MCB-3), this protein is IMP cyclohydrolase.